We begin with the raw amino-acid sequence, 193 residues long: PXMP2/4 family protein 2 (193 aa).

The next 4 membrane-spanning stretches (helical) occupy residues 56 to 78 (VATM…YRSL), 96 to 116 (IDQL…TNFI), 132 to 152 (LFYA…INFS), and 160 to 180 (VLYS…ISFD).

It belongs to the peroxisomal membrane protein PXMP2/4 family.

It is found in the membrane. The chain is PXMP2/4 family protein 2 from Dictyostelium discoideum (Social amoeba).